An 85-amino-acid polypeptide reads, in one-letter code: Mitochondrial import inner membrane translocase subunit TIM9 (85 aa).

The Twin CX3C motif signature appears at Cys35–Cys59. 2 cysteine pairs are disulfide-bonded: Cys35–Cys59 and Cys39–Cys55.

The protein belongs to the small Tim family. In terms of assembly, heterohexamer; composed of 3 copies of TIM9 and 3 copies of TIM10, named soluble 70 kDa complex. Associates with the TIM22 complex, whose core is composed of TIM22 and TIM54. Interacts with the transmembrane regions of multi-pass transmembrane proteins in transit.

Its subcellular location is the mitochondrion inner membrane. Functionally, mitochondrial intermembrane chaperone that participates in the import and insertion of multi-pass transmembrane proteins into the mitochondrial inner membrane. Also required for the transfer of beta-barrel precursors from the TOM complex to the sorting and assembly machinery (SAM complex) of the outer membrane. Acts as a chaperone-like protein that protects the hydrophobic precursors from aggregation and guide them through the mitochondrial intermembrane space. The sequence is that of Mitochondrial import inner membrane translocase subunit TIM9 (TIM9) from Yarrowia lipolytica (strain CLIB 122 / E 150) (Yeast).